A 664-amino-acid polypeptide reads, in one-letter code: Xyloglucan-specific galacturonosyltransferase 1 (664 aa).

Residues 1–21 (MSLSKHLQKLVHKRESKKQPN) show a composition bias toward basic residues. Residues 1–49 (MSLSKHLQKLVHKRESKKQPNKKMPVSVSKLRRPRTSKKTETGNPEKTL) are disordered. The Cytoplasmic portion of the chain corresponds to 1–71 (MSLSKHLQKL…IFSARSFLYR (71 aa)). The chain crosses the membrane as a helical; Signal-anchor for type II membrane protein span at residues 72-92 (VPLTILFLFLIYLWSTSTTVI). At 93-664 (SGNVVHICIS…SLFKKIAKTV (572 aa)) the chain is on the lumenal side. N-linked (GlcNAc...) asparagine glycans are attached at residues Asn126, Asn158, Asn175, Asn181, Asn355, Asn379, and Asn522.

This sequence belongs to the glycosyltransferase 47 family. Root hair specific. Expressed in roots and young leaves.

It is found in the golgi apparatus membrane. Its function is as follows. Xyloglucan-specific galacturonosyltransferase that forms the beta-D-galactosyluronic acid-(1-&gt;2)-alpha-D-xylosyl linkage. Required for root hair development probably by providing important acidic xyloglucans. The protein is Xyloglucan-specific galacturonosyltransferase 1 of Arabidopsis thaliana (Mouse-ear cress).